Reading from the N-terminus, the 174-residue chain is Peptide deformylase (174 aa).

Positions 91 and 133 each coordinate Fe cation. Glutamate 134 is a catalytic residue. Histidine 137 provides a ligand contact to Fe cation.

It belongs to the polypeptide deformylase family. Requires Fe(2+) as cofactor.

It carries out the reaction N-terminal N-formyl-L-methionyl-[peptide] + H2O = N-terminal L-methionyl-[peptide] + formate. In terms of biological role, removes the formyl group from the N-terminal Met of newly synthesized proteins. Requires at least a dipeptide for an efficient rate of reaction. N-terminal L-methionine is a prerequisite for activity but the enzyme has broad specificity at other positions. This chain is Peptide deformylase, found in Fusobacterium nucleatum subsp. nucleatum (strain ATCC 25586 / DSM 15643 / BCRC 10681 / CIP 101130 / JCM 8532 / KCTC 2640 / LMG 13131 / VPI 4355).